Consider the following 155-residue polypeptide: Ribonuclease H (155 aa).

The RNase H type-1 domain occupies 1 to 142 (MLKQVEIFTD…CDELARAAAM (142 aa)). Mg(2+) is bound by residues aspartate 10, glutamate 48, aspartate 70, and aspartate 134.

The protein belongs to the RNase H family. In terms of assembly, monomer. Requires Mg(2+) as cofactor.

It is found in the cytoplasm. It carries out the reaction Endonucleolytic cleavage to 5'-phosphomonoester.. Functionally, endonuclease that specifically degrades the RNA of RNA-DNA hybrids. The polypeptide is Ribonuclease H (Escherichia coli (strain 55989 / EAEC)).